We begin with the raw amino-acid sequence, 335 residues long: Calcium/calmodulin-dependent protein kinase type I (335 aa).

Positions 31-291 constitute a Protein kinase domain; that stretch reads YRVGRVLGGG…AADALKHPFL (261 aa). 37-45 contacts ATP; it reads LGGGTYATV. Residue Asp154 is the Proton acceptor of the active site. Residue Thr192 is modified to Phosphothreonine; by autocatalysis. The interval 310-334 is calmodulin-binding; the sequence is NARKTFRTAYNAVRAFNTWKKLENK.

This sequence belongs to the protein kinase superfamily. CAMK Ser/Thr protein kinase family. CaMK subfamily.

The protein localises to the cytoplasm. It carries out the reaction L-seryl-[protein] + ATP = O-phospho-L-seryl-[protein] + ADP + H(+). The catalysed reaction is L-threonyl-[protein] + ATP = O-phospho-L-threonyl-[protein] + ADP + H(+). Important in cell cycle regulation. In Schizosaccharomyces pombe (strain 972 / ATCC 24843) (Fission yeast), this protein is Calcium/calmodulin-dependent protein kinase type I (cmk1).